Here is a 192-residue protein sequence, read N- to C-terminus: Xanthine phosphoribosyltransferase (192 aa).

Positions 20 and 27 each coordinate xanthine. Position 128 to 132 (128 to 132 (ANGQA)) interacts with 5-phospho-alpha-D-ribose 1-diphosphate. A xanthine-binding site is contributed by lysine 156.

Belongs to the purine/pyrimidine phosphoribosyltransferase family. Xpt subfamily. Homodimer.

The protein resides in the cytoplasm. It carries out the reaction XMP + diphosphate = xanthine + 5-phospho-alpha-D-ribose 1-diphosphate. It participates in purine metabolism; XMP biosynthesis via salvage pathway; XMP from xanthine: step 1/1. Functionally, converts the preformed base xanthine, a product of nucleic acid breakdown, to xanthosine 5'-monophosphate (XMP), so it can be reused for RNA or DNA synthesis. This chain is Xanthine phosphoribosyltransferase, found in Listeria monocytogenes serotype 4b (strain F2365).